The following is a 612-amino-acid chain: Dihydroxy-acid dehydratase (612 aa).

Residue aspartate 81 participates in Mg(2+) binding. Cysteine 122 lines the [2Fe-2S] cluster pocket. 2 residues coordinate Mg(2+): aspartate 123 and lysine 124. Position 124 is an N6-carboxylysine (lysine 124). Cysteine 195 serves as a coordination point for [2Fe-2S] cluster. Glutamate 491 contributes to the Mg(2+) binding site. Serine 517 acts as the Proton acceptor in catalysis.

It belongs to the IlvD/Edd family. As to quaternary structure, homodimer. It depends on [2Fe-2S] cluster as a cofactor. Mg(2+) is required as a cofactor.

It catalyses the reaction (2R)-2,3-dihydroxy-3-methylbutanoate = 3-methyl-2-oxobutanoate + H2O. It carries out the reaction (2R,3R)-2,3-dihydroxy-3-methylpentanoate = (S)-3-methyl-2-oxopentanoate + H2O. Its pathway is amino-acid biosynthesis; L-isoleucine biosynthesis; L-isoleucine from 2-oxobutanoate: step 3/4. The protein operates within amino-acid biosynthesis; L-valine biosynthesis; L-valine from pyruvate: step 3/4. In terms of biological role, functions in the biosynthesis of branched-chain amino acids. Catalyzes the dehydration of (2R,3R)-2,3-dihydroxy-3-methylpentanoate (2,3-dihydroxy-3-methylvalerate) into 2-oxo-3-methylpentanoate (2-oxo-3-methylvalerate) and of (2R)-2,3-dihydroxy-3-methylbutanoate (2,3-dihydroxyisovalerate) into 2-oxo-3-methylbutanoate (2-oxoisovalerate), the penultimate precursor to L-isoleucine and L-valine, respectively. The protein is Dihydroxy-acid dehydratase of Rhizobium leguminosarum bv. trifolii (strain WSM2304).